The primary structure comprises 123 residues: Small ribosomal subunit protein uS12 (123 aa).

A disordered region spans residues 1-28 (MPTIQQLIRKPRQPKVKRSKSMHLEQCP). Over residues 9 to 21 (RKPRQPKVKRSKS) the composition is skewed to basic residues. Position 89 is a 3-methylthioaspartic acid (Asp89).

It belongs to the universal ribosomal protein uS12 family. Part of the 30S ribosomal subunit. Contacts proteins S8 and S17. May interact with IF1 in the 30S initiation complex.

Its function is as follows. With S4 and S5 plays an important role in translational accuracy. Functionally, interacts with and stabilizes bases of the 16S rRNA that are involved in tRNA selection in the A site and with the mRNA backbone. Located at the interface of the 30S and 50S subunits, it traverses the body of the 30S subunit contacting proteins on the other side and probably holding the rRNA structure together. The combined cluster of proteins S8, S12 and S17 appears to hold together the shoulder and platform of the 30S subunit. This Ruegeria sp. (strain TM1040) (Silicibacter sp.) protein is Small ribosomal subunit protein uS12.